The following is an 862-amino-acid chain: Genome polyprotein (862 aa).

Gly2 carries the N-myristoyl glycine; by host lipid modification.

This sequence belongs to the picornaviruses polyprotein family. In terms of assembly, interacts with capsid protein VP1 and capsid protein VP3 to form heterotrimeric protomers. Interacts with capsid protein VP0, and capsid protein VP3 to form heterotrimeric protomers. Five protomers subsequently associate to form pentamers which serve as building blocks for the capsid. Interacts with capsid protein VP2, capsid protein VP3 and capsid protein VP4 following cleavage of capsid protein VP0. As to quaternary structure, interacts with capsid protein VP1 and capsid protein VP3 in the mature capsid. In terms of assembly, interacts with capsid protein VP0 and capsid protein VP1 to form heterotrimeric protomers. Five protomers subsequently associate to form pentamers which serve as building blocks for the capsid. Interacts with capsid protein VP4 in the mature capsid. Interacts with protein 2C; this interaction may be important for virion morphogenesis. Interacts with capsid protein VP1 and capsid protein VP3. Post-translationally, specific enzymatic cleavages in vivo by the viral proteases yield processing intermediates and the mature proteins. In terms of processing, myristoylation is required for the formation of pentamers during virus assembly. Further assembly of 12 pentamers and a molecule of genomic RNA generates the provirion. During virion maturation, immature virions are rendered infectious following cleavage of VP0 into VP4 and VP2. This maturation seems to be an autocatalytic event triggered by the presence of RNA in the capsid and it is followed by a conformational change infectious virion. Post-translationally, myristoylation is required during RNA encapsidation and formation of the mature virus particle.

The protein resides in the virion. The protein localises to the host cytoplasm. Its function is as follows. Forms an icosahedral capsid of pseudo T=3 symmetry with capsid proteins VP2 and VP3. The capsid is 300 Angstroms in diameter, composed of 60 copies of each capsid protein and enclosing the viral positive strand RNA genome. Capsid protein VP1 mainly forms the vertices of the capsid. Capsid protein VP1 interacts with host cell receptor to provide virion attachment to target host cells. This attachment induces virion internalization. Tyrosine kinases are probably involved in the entry process. After binding to its receptor, the capsid undergoes conformational changes. Capsid protein VP1 N-terminus (that contains an amphipathic alpha-helix) and capsid protein VP4 are externalized. Together, they shape a pore in the host membrane through which viral genome is translocated to host cell cytoplasm. Functionally, forms an icosahedral capsid of pseudo T=3 symmetry with capsid proteins VP2 and VP3. The capsid is 300 Angstroms in diameter, composed of 60 copies of each capsid protein and enclosing the viral positive strand RNA genome. In terms of biological role, lies on the inner surface of the capsid shell. After binding to the host receptor, the capsid undergoes conformational changes. Capsid protein VP4 is released, Capsid protein VP1 N-terminus is externalized, and together, they shape a pore in the host membrane through which the viral genome is translocated into the host cell cytoplasm. Component of immature procapsids, which is cleaved into capsid proteins VP4 and VP2 after maturation. Allows the capsid to remain inactive before the maturation step. This Echovirus 16 (strain Harrington) protein is Genome polyprotein.